The primary structure comprises 115 residues: Probable non-functional immunoglobulin heavy variable 3-38-3 (115 aa).

Positions 1–19 (MQFVLSWVFLVAILKGVQC) are cleaved as a signal peptide. Positions 20–44 (EVQLVESRGVLVQPGGSLRLSCAAS) are framework-1. Positions 31 to 115 (VQPGGSLRLS…EDTAVYYCKK (85 aa)) constitute an Ig-like domain. C41 and C113 are joined by a disulfide. The complementarity-determining-1 stretch occupies residues 45–52 (GFTVSSNE). Residues 53–69 (MSWVRQAPGKGLEWVSS) are framework-2. The segment at 70–75 (ISGGST) is complementarity-determining-2. The tract at residues 76–113 (YYADSRKGRFTISRDNSKNTLHLQMNSLRAEDTAVYYC) is framework-3. Residues 114–115 (KK) form a complementarity-determining-3 region.

In terms of assembly, immunoglobulins are composed of two identical heavy chains and two identical light chains; disulfide-linked.

Its subcellular location is the secreted. The protein resides in the cell membrane. Functionally, probable non-functional open reading frame (ORF) of V region of the variable domain of immunoglobulin heavy chains. Non-functional ORF generally cannot participate in the synthesis of a productive immunoglobulin chain due to altered V-(D)-J or switch recombination and/or splicing site (at mRNA level) and/or conserved amino acid change (protein level). Immunoglobulins, also known as antibodies, are membrane-bound or secreted glycoproteins produced by B lymphocytes. In the recognition phase of humoral immunity, the membrane-bound immunoglobulins serve as receptors which, upon binding of a specific antigen, trigger the clonal expansion and differentiation of B lymphocytes into immunoglobulins-secreting plasma cells. Secreted immunoglobulins mediate the effector phase of humoral immunity, which results in the elimination of bound antigens. The antigen binding site is formed by the variable domain of one heavy chain, together with that of its associated light chain. Thus, each immunoglobulin has two antigen binding sites with remarkable affinity for a particular antigen. The variable domains are assembled by a process called V-(D)-J rearrangement and can then be subjected to somatic hypermutations which, after exposure to antigen and selection, allow affinity maturation for a particular antigen. The protein is Probable non-functional immunoglobulin heavy variable 3-38-3 of Homo sapiens (Human).